The sequence spans 1873 residues: Girdin (1873 aa).

Residues 12–132 (QFMTSPLVTW…KLLLLLLGCA (121 aa)) form the Calponin-homology (CH) domain. Positions 196 to 425 (HLRRLIDERD…EMAQKQSMDE (230 aa)) form a coiled coil. Phosphoserine is present on residues Ser-233, Ser-237, and Ser-449. Coiled-coil stretches lie at residues 458 to 1232 (TSSK…ESKN) and 1268 to 1385 (HKNL…KFYD). 2 disordered regions span residues 816-841 (ENKS…NKRL) and 1013-1034 (EERM…GRES). Residue Ser-1020 is modified to Phosphoserine. A Phosphoserine modification is found at Ser-1387. The phosphoinositide-binding stretch occupies residues 1390–1408 (RRRGNWITLKMRKLIKSKK). Residues 1407 to 1416 (KKDINRERQK) are compositionally biased toward basic and acidic residues. Disordered stretches follow at residues 1407-1459 (KKDI…LGTK), 1560-1602 (TTSF…SNNN), and 1616-1643 (QSRP…GSSP). At Ser-1417 the chain carries Phosphoserine; by PKB/AKT1. Composition is skewed to polar residues over residues 1417-1430 (SLTL…SSEG), 1445-1459 (VGSN…LGTK), 1560-1579 (TTSF…STGS), and 1616-1626 (QSRPQSHSSGD). Thr-1421 carries the post-translational modification Phosphothreonine. Positions 1674 to 1704 (KAGSPGSEVVTLQQFLEESNKLTSIQLKSSS) match the GBA motif. 3 positions are modified to phosphoserine: Ser-1677, Ser-1692, and Ser-1719. The interval 1715 to 1825 (SLSVSSDFLG…GTTRRTSIHD (111 aa)) is SH2-like; required for interaction with growth factor receptors. Residues 1738-1873 (SGKTPGDFYD…KSRSREQQSS (136 aa)) are disordered. Basic and acidic residues predominate over residues 1745–1755 (FYDRRTTKPEF). Tyr-1767 carries the post-translational modification Phosphotyrosine. Composition is skewed to polar residues over residues 1768–1781 (TISS…STQG), 1789–1801 (TSVS…SNPY), and 1809–1820 (SVISTAEGTTRR). Tyr-1801 bears the Phosphotyrosine mark. A phosphoserine mark is found at Ser-1822 and Ser-1839. The segment covering 1822–1832 (SIHDFLSKDSR) has biased composition (basic and acidic residues). Low complexity predominate over residues 1839–1852 (SSPPTAGSSSTTAS). Positions 1858–1873 (QESRNSKSRSREQQSS) are enriched in basic and acidic residues.

It belongs to the CCDC88 family. As to quaternary structure, homodimer. Interacts (via GBA motif) with guanine nucleotide-binding protein G(i) alpha subunits GNAI1, GNAI2 and GNAI3. Also interacts (via GNA motif) with guanine nucleotide-binding protein G(s) alpha subunit GNAS. Interaction with G(i) alpha subunits occurs before interaction with GNAS and is regulated by phosphorylation; phosphorylation at Ser-1677 enhances binding to G(i) alpha subunits while phosphorylation at Ser-1692 abolishes G(i) alpha subunit binding, promoting binding to GNAS. Interacts (via C-terminal SH2-like region) with growth factor receptors EGFR, INSR and KDR/VEGFR2 (via their autophosphorylated cytoplasmic tails). Forms a complex with EGFR and GNAI3 which leads to enhanced EGFR signaling and triggering of cell migration; ligand stimulation is required for recruitment of GNAI3 to the complex. Interacts (tyrosine-phosphorylated form) with phosphatidylinositol 3-kinase (PI3K) regulatory subunit PIK3R1/p85a (via SH2 domains); the interaction enables recruitment of PIK3R1 to the EGFR receptor, enhancing PI3K activity and cell migration. Interacts with serine/threonine-protein kinase PRKCQ; the interaction leads to phosphorylation of CCDC88A and inhibition of its guanine nucleotide exchange factor activity. Interacts (via C-terminus) with DISC1; the interaction is direct. Interacts with AKT proteins; the interaction is inhibited in the presence of DISC1. Interacts with AKT1/PKB (via C-terminus). The non-phosphorylated form interacts with phosphatidylinositol 4-phosphate [Pi(4)P] and weakly with phosphatidylinositol 3-phosphate [Pi(3)P]. Interacts with microtubules. Interacts with actin. Post-translationally, phosphorylation is induced by epidermal growth factor (EGF) in a phosphoinositide 3-kinase (PI3K)-dependent manner. Phosphorylation by AKT1/PKB is necessary for the delocalization from the cell membrane and for cell migration. Phosphorylated on tyrosine residues which promotes binding to phosphatidylinositol 3-kinase (PI3K) regulatory subunit PIK3R1/p85a and enhances PI3K activity. Tyrosine-phosphorylated by both receptor and non-receptor tyrosine kinases in vitro. Tyrosine phosphorylation is required for AKT1-dependent phosphorylation of Ser-1417. Phosphorylation at Ser-1692 by PRKCQ disrupts interaction with GNAI3 and inhibits guanine nucleotide exchange factor activity. Expressed in the dentate gyrus, pyramidal cell layer of hippocampal regions CA1 and CA3 at postnatal 15. Expressed highly in neurons. Weakly in neuron progenitors (at protein level). Expressed in the dentate granule cell layer of the hippocampus. Expressed highly in the adult testis, moderately in the brain and at a low level in the spleen, lungs and fat.

The protein localises to the cell membrane. The protein resides in the cytoplasm. It is found in the cytosol. Its subcellular location is the cytoplasmic vesicle. It localises to the cell projection. The protein localises to the lamellipodium. The protein resides in the cytoskeleton. It is found in the cilium basal body. Its subcellular location is the microtubule organizing center. It localises to the centrosome. The protein localises to the centriole. Bifunctional modulator of guanine nucleotide-binding proteins (G proteins). Acts as a non-receptor guanine nucleotide exchange factor which binds to and activates guanine nucleotide-binding protein G(i) alpha subunits. Also acts as a guanine nucleotide dissociation inhibitor for guanine nucleotide-binding protein G(s) subunit alpha GNAS. Essential for cell migration. Interacts in complex with G(i) alpha subunits with the EGFR receptor, retaining EGFR at the cell membrane following ligand stimulation and promoting EGFR signaling which triggers cell migration. Binding to Gi-alpha subunits displaces the beta and gamma subunits from the heterotrimeric G-protein complex which enhances phosphoinositide 3-kinase (PI3K)-dependent phosphorylation and kinase activity of AKT1/PKB. Phosphorylation of AKT1/PKB induces the phosphorylation of downstream effectors GSK3 and FOXO1/FKHR, and regulates DNA replication and cell proliferation. Binds in its tyrosine-phosphorylated form to the phosphatidylinositol 3-kinase (PI3K) regulatory subunit PIK3R1 which enables recruitment of PIK3R1 to the EGFR receptor, enhancing PI3K activity and cell migration. Plays a role as a key modulator of the AKT-mTOR signaling pathway, controlling the tempo of the process of newborn neuron integration during adult neurogenesis, including correct neuron positioning, dendritic development and synapse formation. Inhibition of G(s) subunit alpha GNAS leads to reduced cellular levels of cAMP and suppression of cell proliferation. Essential for the integrity of the actin cytoskeleton. Required for formation of actin stress fibers and lamellipodia. May be involved in membrane sorting in the early endosome. Plays a role in ciliogenesis and cilium morphology and positioning and this may partly be through regulation of the localization of scaffolding protein CROCC/Rootletin. This Mus musculus (Mouse) protein is Girdin (Ccdc88a).